Reading from the N-terminus, the 394-residue chain is MTIADLPLLPLGRGTDLTSERGVECPGDLPPASDPALVERARAAKAALGDRVFVLGHHYQRDEVIQFADVTGDSFKLAREAAARPDAEYIVFCGVHFMAESADILTGPSQQVILPDLAAGCSMADMARLTQVEMAWDALAAAGVADSVVPVTYMNSSADIKAFCGRNGGLVCTSSNAEVALEWAFEQKGGVEGDAKILFLPDQHLGRNTAVLKMGLSVDDCVVWDPFRPGGGLTPEQLRAAKVILWRGHCSVHGKFSPDVVDELRATIPGVQILVHPECTHELVLKADLVGSTEFIIKTIEAAPSGSSWSIGTELNLVKRLSAAHPDKNISFLDKTVCYCSTMNRIDLPHLVWALESLVAGTVVNRIEVDPETETWALLALERMLALPGKSHKD.

His-57 and Ser-74 together coordinate iminosuccinate. Cys-121 lines the [4Fe-4S] cluster pocket. Iminosuccinate-binding positions include 153 to 155 and Ser-174; that span reads YMN. [4Fe-4S] cluster is bound at residue Cys-250. Iminosuccinate contacts are provided by residues 276-278 and Thr-293; that span reads HPE. Residue Cys-340 coordinates [4Fe-4S] cluster.

It belongs to the quinolinate synthase family. Type 3 subfamily. The cofactor is [4Fe-4S] cluster.

It is found in the cytoplasm. The enzyme catalyses iminosuccinate + dihydroxyacetone phosphate = quinolinate + phosphate + 2 H2O + H(+). It participates in cofactor biosynthesis; NAD(+) biosynthesis; quinolinate from iminoaspartate: step 1/1. Catalyzes the condensation of iminoaspartate with dihydroxyacetone phosphate to form quinolinate. The protein is Quinolinate synthase of Nocardioides sp. (strain ATCC BAA-499 / JS614).